We begin with the raw amino-acid sequence, 234 residues long: Sugar fermentation stimulation protein A (234 aa).

The H-T-H motif DNA-binding region spans 201–220; that stretch reads LLSEAQQRGVEILAYKAELS.

The protein belongs to the SfsA family.

Functionally, binds to DNA non-specifically. Could be a regulatory factor involved in maltose metabolism. This chain is Sugar fermentation stimulation protein A, found in Escherichia coli O127:H6 (strain E2348/69 / EPEC).